The following is a 140-amino-acid chain: Putative ABC transporter permease protein ORF1 (140 aa).

One can recognise an ABC transmembrane type-1 domain in the interval aspartate 1–phenylalanine 133. 3 helical membrane passes run valine 9–leucine 29, threonine 65–threonine 85, and threonine 115–threonine 135.

This sequence belongs to the binding-protein-dependent transport system permease family. MalFG subfamily.

The protein resides in the cell membrane. Functionally, may play a role in sugar transport. The sequence is that of Putative ABC transporter permease protein ORF1 from Caldicellulosiruptor sp. (strain Rt8B.4).